The following is a 264-amino-acid chain: Interleukin-33 (264 aa).

Residues 1-67 (MRPRMKYSNS…ETCYFGKEPA (67 aa)) are homeodomain-like HTH domain. The propeptide occupies 1–101 (MRPRMKYSNS…RSLLGSIQAF (101 aa)). Positions 66–108 (PAKRYSLKSGSKHEGRLSTCLPDSRKRSLLGSIQAFAASVDTL) are interaction with RELA.

It belongs to the IL-1 family. Highly divergent. In terms of assembly, forms a 1:1:1 heterotrimeric complex with its primary high-affinity receptor IL1RL1 and the coreceptor IL1RAP. Interacts with cargo receptor TMED10; the interaction mediates the translocation from the cytoplasm into the ERGIC (endoplasmic reticulum-Golgi intermediate compartment) and thereby secretion. In terms of processing, the full-length protein can be released from cells and is able to signal via the IL1RL1/ST2 receptor. However, proteolytic processing by CELA1, CSTG/cathepsin G and ELANE/neutrophil elastase produces C-terminal peptides that are more active than the unprocessed full-length protein. May also be proteolytically processed by calpains. Proteolytic cleavage mediated by apoptotic caspases including CASP3 and CASP7 results in IL33 inactivation. In vitro proteolytic cleavage by CASP1 was reported but could not be confirmed in vivo suggesting that IL33 is probably not a direct substrate for that caspase.

It localises to the nucleus. Its subcellular location is the chromosome. The protein localises to the cytoplasm. The protein resides in the cytoplasmic vesicle. It is found in the secretory vesicle. It localises to the secreted. Functionally, cytokine that binds to and signals through the IL1RL1/ST2 receptor which in turn activates NF-kappa-B and MAPK signaling pathways in target cells. Involved in the maturation of Th2 cells inducing the secretion of T-helper type 2-associated cytokines. Also involved in activation of mast cells, basophils, eosinophils and natural killer cells. Acts as a chemoattractant for Th2 cells, and may function as an 'alarmin', that amplifies immune responses during tissue injury. Induces rapid UCP2-dependent mitochondrial rewiring that attenuates the generation of reactive oxygen species and preserves the integrity of Krebs cycle required for persistent production of itaconate and subsequent GATA3-dependent differentiation of inflammation-resolving alternatively activated macrophages. In terms of biological role, in quiescent endothelia the uncleaved form is constitutively and abundantly expressed, and acts as a chromatin-associated nuclear factor with transcriptional repressor properties, it may sequester nuclear NF-kappaB/RELA, lowering expression of its targets. This form is rapidely lost upon angiogenic or pro-inflammatory activation. The sequence is that of Interleukin-33 from Rattus norvegicus (Rat).